Consider the following 295-residue polypeptide: MEVLDVLNLGEIAQYFSKMAMFPVFDVAYYIVSILYLKYEPGAVEVSRRSPVASWLCAMLYCFGSYILADIMLGVCPIDYFHNNSHILLASAVWYLIFFCPLNLFYKCVAFMPVKLVLVALKEVVRTRKIAAGVHHAHHAYHHGWLIMVITGYVKGSGVALMSNFEQLLRGVWKPETNEVLNMSFPTKASLYGAILFTLQEAHVLPVSKSTLICLFTLFMVSSKVFMTARHSHGSPFALIESWVCHVLFGSPLGTEDAHDHHHAAPAAAPAPLSPAKNKEELSEGTRKRKSKKAE.

Residues M1 to K18 lie on the Lumenal side of the membrane. Residues M19–L37 form a helical membrane-spanning segment. Over K38–P51 the chain is Cytoplasmic. The chain crosses the membrane as a helical span at residues V52–V75. Ca(2+) is bound at residue G74. The Lumenal segment spans residues C76–H86. A helical membrane pass occupies residues I87 to Y106. The Cytoplasmic portion of the chain corresponds to K107 to G144. A 1,2-diacyl-sn-glycero-3-phospho-(1D-myo-inositol-4,5-bisphosphate) is bound by residues K122 and R126. Residues W145–M162 form a helical membrane-spanning segment. Over S163–N182 the chain is Lumenal. The helical transmembrane segment at M183–L199 threads the bilayer. Residues Q200–S210 are Cytoplasmic-facing. A helical transmembrane segment spans residues T211–M227. At T228–P236 the chain is on the lumenal side. A helical transmembrane segment spans residues F237 to T255. Residues E256–E295 are Cytoplasmic-facing. Residues H259–E295 form a disordered region. A compositionally biased stretch (low complexity) spans A265–A276. Residues K277–T286 are compositionally biased toward basic and acidic residues.

It belongs to the TMEM38 family. Homotrimer; conformation seems to be controled by binding to diacylglycerol (DAG).

It is found in the sarcoplasmic reticulum membrane. The protein localises to the nucleus membrane. The enzyme catalyses K(+)(in) = K(+)(out). Its activity is regulated as follows. Channel activity is activated by a change of voltage within the sarcoplasmic reticulum lumen and blocked by luminal high Ca(2+) levels. Functionally, intracellular monovalent cation channel required for maintenance of rapid intracellular calcium release. Acts as a potassium counter-ion channel that functions in synchronization with calcium release from intracellular stores. Opened by a change of voltage within the sarcoplasmic reticulum lumen. The polypeptide is Trimeric intracellular cation channel type A (tmem38a) (Danio rerio (Zebrafish)).